A 38-amino-acid chain; its full sequence is Photosystem II reaction center protein X (38 aa).

Residues 9–29 (IASLFAGAFIALAIGGVLVFI) form a helical membrane-spanning segment.

The protein belongs to the PsbX family. Type 1 subfamily. As to quaternary structure, PSII is composed of 1 copy each of membrane proteins PsbA, PsbB, PsbC, PsbD, PsbE, PsbF, PsbH, PsbI, PsbJ, PsbK, PsbL, PsbM, PsbT, PsbX, PsbY, PsbZ, Psb30/Ycf12, at least 3 peripheral proteins of the oxygen-evolving complex and a large number of cofactors. It forms dimeric complexes.

It is found in the plastid. Its subcellular location is the chloroplast thylakoid membrane. In terms of biological role, involved in the binding and/or turnover of quinones at the Q(B) site of photosystem II (PSII). PSII is a light-driven water plastoquinone oxidoreductase, using light energy to abstract electrons from H(2)O, generating a proton gradient subsequently used for ATP formation. The chain is Photosystem II reaction center protein X from Phaeodactylum tricornutum (strain CCAP 1055/1).